The sequence spans 275 residues: Erythroagglutinating phytohemagglutinin (275 aa).

A signal peptide spans 1-21 (MASSNLLSLALFLVLLTHANS). Residue Asn33 is glycosylated (N-linked (GlcNAc...) (high mannose) asparagine). Asn81 and Asn101 each carry an N-linked (GlcNAc...) asparagine glycan.

This sequence belongs to the leguminous lectin family.

Its function is as follows. This insecticidal carbohydrate-binding lectin is toxic for the cowpea weevil. The protein is Erythroagglutinating phytohemagglutinin (DLEC1) of Phaseolus vulgaris (Kidney bean).